A 344-amino-acid polypeptide reads, in one-letter code: Phenylalanine--tRNA ligase alpha subunit (344 aa).

Glu-256 is a binding site for Mg(2+).

The protein belongs to the class-II aminoacyl-tRNA synthetase family. Phe-tRNA synthetase alpha subunit type 1 subfamily. Tetramer of two alpha and two beta subunits. The cofactor is Mg(2+).

The protein resides in the cytoplasm. It carries out the reaction tRNA(Phe) + L-phenylalanine + ATP = L-phenylalanyl-tRNA(Phe) + AMP + diphosphate + H(+). This is Phenylalanine--tRNA ligase alpha subunit from Bacillus cereus (strain G9842).